An 828-amino-acid polypeptide reads, in one-letter code: Isethionate sulfite-lyase (828 aa).

The PFL domain maps to 30-698; that stretch reads ERVFTILESF…VVSATPNGRK (669 aa). 2-hydroxyethane-1-sulfonate contacts are provided by residues R187, Q191, 466–468, and R676; that span reads CTE. Residue C466 is the Cysteine radical intermediate of the active site. Residue E468 is the Proton acceptor of the active site. The region spanning 705-828 is the Glycine radical domain; the sequence is DGSSASHGAD…LIARTGHDVM (124 aa). Residue G803 is modified to Glycine radical.

Belongs to the glycyl radical enzyme (GRE) family. Homodimer. In terms of processing, requires the activating protein IseH to generate the key active site glycyl radical on Gly-803 that is involved in catalysis.

It carries out the reaction 2-hydroxyethane-1-sulfonate = acetaldehyde + sulfite + H(+). It participates in organosulfur degradation; alkanesulfonate degradation. Functionally, involved in an anaerobic respiration pathway that converts the sulfonate isethionate (2-hydroxyethanesulfonate) to ammonia, acetate and sulfide. Catalyzes the radical-mediated C-S bond cleavage of isethionate (2-hydroxyethanesulfonate) to form sulfite and acetaldehyde. Shows no activity with taurine or ethanolamine as substrates. The chain is Isethionate sulfite-lyase from Nitratidesulfovibrio vulgaris (strain ATCC 29579 / DSM 644 / CCUG 34227 / NCIMB 8303 / VKM B-1760 / Hildenborough) (Desulfovibrio vulgaris).